We begin with the raw amino-acid sequence, 405 residues long: Putative phosphate permease PYRAB14010 (405 aa).

11 consecutive transmembrane segments (helical) span residues 3–23 (MDPWLLLTLILGLAMAWAIGA), 44–64 (AVLIAGILEFTGAYFFGKTVT), 82–102 (VLVYGSLAALLGATIWLVIAT), 114–134 (IIGGIVGYGVVYAGLEIVNWG), 138–158 (SVVLSWILSPIVGAIFAFFIF), 181–201 (VWIGLAFVVIGTMFYIKVLHG), 207–227 (GVLKLGIPVGLVVFLITSMIL), 264–284 (VANAIGPVAAVYTIATMGMAG), 287–307 (VPVPRWILALGGLGIAIGVAT), 329–349 (FTIDFSAATVVLIASWLGMPI), and 384–404 (FVTVPVAGLISAIIFKILWIV).

Belongs to the inorganic phosphate transporter (PiT) (TC 2.A.20) family.

Its subcellular location is the cell membrane. Its function is as follows. Potential transporter for phosphate. The sequence is that of Putative phosphate permease PYRAB14010 from Pyrococcus abyssi (strain GE5 / Orsay).